The chain runs to 200 residues: Large ribosomal subunit protein uL4 (200 aa).

The interval 43–70 (RAQKTRAEVSGSGKKPWRQKGTGRARSG) is disordered.

The protein belongs to the universal ribosomal protein uL4 family. As to quaternary structure, part of the 50S ribosomal subunit.

Functionally, one of the primary rRNA binding proteins, this protein initially binds near the 5'-end of the 23S rRNA. It is important during the early stages of 50S assembly. It makes multiple contacts with different domains of the 23S rRNA in the assembled 50S subunit and ribosome. Its function is as follows. Forms part of the polypeptide exit tunnel. The sequence is that of Large ribosomal subunit protein uL4 from Glaesserella parasuis serovar 5 (strain SH0165) (Haemophilus parasuis).